An 877-amino-acid polypeptide reads, in one-letter code: DNA mismatch repair protein MutS (877 aa).

630-637 (GPNMAGKS) is an ATP binding site.

It belongs to the DNA mismatch repair MutS family.

This protein is involved in the repair of mismatches in DNA. It is possible that it carries out the mismatch recognition step. This protein has a weak ATPase activity. This is DNA mismatch repair protein MutS from Jannaschia sp. (strain CCS1).